A 701-amino-acid chain; its full sequence is Interleukin-1 receptor accessory protein-like 1-A (701 aa).

The first 19 residues, 1-19 (MTALNPVLFLLCGVSVSLS), serve as a signal peptide directing secretion. Residues 20–361 (LKVVSKRGSV…IGKRVELMYT (342 aa)) are Extracellular-facing. An Ig-like C2-type 1 domain is found at 33–133 (TDWSVDYLKY…RNSTFCMKVS (101 aa)). Cysteines 54 and 121 form a disulfide. Residues Asn64, Asn125, Asn141, Asn216, Asn267, and Asn334 are each glycosylated (N-linked (GlcNAc...) asparagine). Ig-like C2-type domains follow at residues 146–235 (CYNS…TYLS) and 245–353 (PRIL…VQIG). Cysteines 167 and 219 form a disulfide. Cys270 and Cys337 are disulfide-bonded. Residues 362–382 (VELAGGLGAILLLLALLLSVY) form a helical membrane-spanning segment. Residues 383–701 (KCYRIELLLC…RETSISSVIW (319 aa)) lie on the Cytoplasmic side of the membrane. Residues 407–563 (KEYDAYLSYS…RFWKQLRYTM (157 aa)) enclose the TIR domain. Glu495 is a catalytic residue. The required for synaptic vesicle accumulation during synaptogenesis stretch occupies residues 568–701 (PQQTITNHAL…RETSISSVIW (134 aa)).

Belongs to the interleukin-1 receptor family.

The protein resides in the cell membrane. Its subcellular location is the cytoplasm. The catalysed reaction is NAD(+) + H2O = ADP-D-ribose + nicotinamide + H(+). Its function is as follows. May regulate secretion and presynaptic differentiation through inhibition of the activity of N-type voltage-gated calcium channel. During presynaptic differentiation may regulate both synaptic vesicle accumulation in axon terminals and subsequent axon terminal remodeling. This Danio rerio (Zebrafish) protein is Interleukin-1 receptor accessory protein-like 1-A (il1rapl1a).